A 369-amino-acid polypeptide reads, in one-letter code: Holliday junction branch migration complex subunit RuvB (369 aa).

The disordered stretch occupies residues 1–21 (MHKNENNRLLGSVSLPDDPDR). A large ATPase domain (RuvB-L) region spans residues 1 to 184 (MHKNENNRLL…FGIPIRLNFY (184 aa)). Residues L23, R24, G65, K68, T69, T70, 131-133 (EDY), R174, Y184, and R221 contribute to the ATP site. Mg(2+) is bound at residue T69. Positions 185-255 (TIEELEYIVK…IADTALSRLE (71 aa)) are small ATPAse domain (RuvB-S). Residues 258–369 (HLGLDPLDRN…QKHLWEKDYD (112 aa)) are head domain (RuvB-H). Residues R294, R313, and R318 each coordinate DNA.

This sequence belongs to the RuvB family. Homohexamer. Forms an RuvA(8)-RuvB(12)-Holliday junction (HJ) complex. HJ DNA is sandwiched between 2 RuvA tetramers; dsDNA enters through RuvA and exits via RuvB. An RuvB hexamer assembles on each DNA strand where it exits the tetramer. Each RuvB hexamer is contacted by two RuvA subunits (via domain III) on 2 adjacent RuvB subunits; this complex drives branch migration. In the full resolvosome a probable DNA-RuvA(4)-RuvB(12)-RuvC(2) complex forms which resolves the HJ.

The protein resides in the cytoplasm. The catalysed reaction is ATP + H2O = ADP + phosphate + H(+). Its function is as follows. The RuvA-RuvB-RuvC complex processes Holliday junction (HJ) DNA during genetic recombination and DNA repair, while the RuvA-RuvB complex plays an important role in the rescue of blocked DNA replication forks via replication fork reversal (RFR). RuvA specifically binds to HJ cruciform DNA, conferring on it an open structure. The RuvB hexamer acts as an ATP-dependent pump, pulling dsDNA into and through the RuvAB complex. RuvB forms 2 homohexamers on either side of HJ DNA bound by 1 or 2 RuvA tetramers; 4 subunits per hexamer contact DNA at a time. Coordinated motions by a converter formed by DNA-disengaged RuvB subunits stimulates ATP hydrolysis and nucleotide exchange. Immobilization of the converter enables RuvB to convert the ATP-contained energy into a lever motion, pulling 2 nucleotides of DNA out of the RuvA tetramer per ATP hydrolyzed, thus driving DNA branch migration. The RuvB motors rotate together with the DNA substrate, which together with the progressing nucleotide cycle form the mechanistic basis for DNA recombination by continuous HJ branch migration. Branch migration allows RuvC to scan DNA until it finds its consensus sequence, where it cleaves and resolves cruciform DNA. In Bartonella bacilliformis (strain ATCC 35685 / KC583 / Herrer 020/F12,63), this protein is Holliday junction branch migration complex subunit RuvB.